The sequence spans 337 residues: Biotin synthase (337 aa).

Positions 58–283 constitute a Radical SAM core domain; sequence EDVEVEGIVS…RTVLRYAGGR (226 aa). The [4Fe-4S] cluster site is built by cysteine 73, cysteine 77, and cysteine 80. Positions 116, 149, 208, and 278 each coordinate [2Fe-2S] cluster.

Belongs to the radical SAM superfamily. Biotin synthase family. Homodimer. [4Fe-4S] cluster serves as cofactor. [2Fe-2S] cluster is required as a cofactor.

The enzyme catalyses (4R,5S)-dethiobiotin + (sulfur carrier)-SH + 2 reduced [2Fe-2S]-[ferredoxin] + 2 S-adenosyl-L-methionine = (sulfur carrier)-H + biotin + 2 5'-deoxyadenosine + 2 L-methionine + 2 oxidized [2Fe-2S]-[ferredoxin]. Its pathway is cofactor biosynthesis; biotin biosynthesis; biotin from 7,8-diaminononanoate: step 2/2. Catalyzes the conversion of dethiobiotin (DTB) to biotin by the insertion of a sulfur atom into dethiobiotin via a radical-based mechanism. This is Biotin synthase from Pseudarthrobacter chlorophenolicus (strain ATCC 700700 / DSM 12829 / CIP 107037 / JCM 12360 / KCTC 9906 / NCIMB 13794 / A6) (Arthrobacter chlorophenolicus).